Here is a 61-residue protein sequence, read N- to C-terminus: Bowman-Birk type proteinase inhibitor B5 (61 aa).

6 disulfides stabilise this stretch: cysteine 5–cysteine 60, cysteine 6–cysteine 22, cysteine 9–cysteine 56, cysteine 12–cysteine 20, cysteine 29–cysteine 36, and cysteine 33–cysteine 48.

It belongs to the Bowman-Birk serine protease inhibitor family. Expressed in bulb (at protein level).

Functionally, serine protease inhibitor. Inhibits trypsin (Ki = 41 nM) and weakly inhibits chymotrypsin (Ki = 410 nM). Does not inhibit bacterial subtilisin. The polypeptide is Bowman-Birk type proteinase inhibitor B5 (Hyacinthus orientalis (Common hyacinth)).